Reading from the N-terminus, the 422-residue chain is Metallocarboxypeptidase A (422 aa).

The N-terminal stretch at 1-17 is a signal peptide; the sequence is MRSVLSLALLAANVVTA. Positions 18-112 are cleaved as a propeptide — activation peptide; that stretch reads AVVSPFDYSG…FEAYSAGYAP (95 aa). The Peptidase M14 domain occupies 119–419; the sequence is SYHSYQDHLS…AGTVAMLKAV (301 aa). H179 and E182 together coordinate Zn(2+). Substrate contacts are provided by residues 179 to 182, R237, and 254 to 255; these read HARE and NR. C248 and C271 are oxidised to a cystine. Position 309 (H309) interacts with Zn(2+). 310-311 provides a ligand contact to substrate; sequence SY. The active-site Proton donor/acceptor is E385.

It belongs to the peptidase M14 family. It depends on Zn(2+) as a cofactor.

The protein localises to the secreted. Functionally, extracellular metalloprotease that contributes to pathogenicity. The sequence is that of Metallocarboxypeptidase A (MCPA) from Trichophyton rubrum (Athlete's foot fungus).